A 217-amino-acid chain; its full sequence is 3,4-dihydroxy-2-butanone 4-phosphate synthase (217 aa).

D-ribulose 5-phosphate contacts are provided by residues 37–38 (RE), Asp-42, 150–154 (RQGHT), and Glu-174. Residue Glu-38 participates in Mg(2+) binding. His-153 provides a ligand contact to Mg(2+).

It belongs to the DHBP synthase family. Homodimer. Mg(2+) serves as cofactor. The cofactor is Mn(2+).

It carries out the reaction D-ribulose 5-phosphate = (2S)-2-hydroxy-3-oxobutyl phosphate + formate + H(+). Its pathway is cofactor biosynthesis; riboflavin biosynthesis; 2-hydroxy-3-oxobutyl phosphate from D-ribulose 5-phosphate: step 1/1. Its function is as follows. Catalyzes the conversion of D-ribulose 5-phosphate to formate and 3,4-dihydroxy-2-butanone 4-phosphate. The sequence is that of 3,4-dihydroxy-2-butanone 4-phosphate synthase from Photorhabdus laumondii subsp. laumondii (strain DSM 15139 / CIP 105565 / TT01) (Photorhabdus luminescens subsp. laumondii).